Here is a 1188-residue protein sequence, read N- to C-terminus: Integrin alpha-11 (1188 aa).

The first 22 residues, 1–22 (MDLPRGLVVAWALSLWPGFTDT), serve as a signal peptide directing secretion. Residues 23–1141 (FNMDTRKPRV…ISKQEDWQVP (1119 aa)) are Extracellular-facing. 2 FG-GAP repeats span residues 24 to 85 (NMDT…NCTK) and 91 to 151 (VTLS…FSKT). An intrachain disulfide couples Cys-76 to Cys-83. Residues Asn-82 and Asn-95 are each glycosylated (N-linked (GlcNAc...) asparagine). Intrachain disulfides connect Cys-121–Cys-139 and Cys-129–Cys-159. The region spanning 164 to 345 (DIVIVLDGSN…AALKDIVDAL (182 aa)) is the VWFA domain. 5 N-linked (GlcNAc...) asparagine glycosylation sites follow: Asn-291, Asn-331, Asn-358, Asn-449, and Asn-462. 5 FG-GAP repeats span residues 355–406 (TNKN…VIPL), 411–461 (LKEF…TMHN), 462–527 (NRSL…LFVY), 528–586 (NGTL…SILK), and 590–650 (QRIT…FEPS). Residues Asp-488, Asp-490, Asp-492, and Asp-496 each coordinate Ca(2+). N-linked (GlcNAc...) asparagine glycosylation is present at Asn-528. Residues Asp-551, Asn-553, Asp-555, Asp-559, Asp-613, Asn-615, Asp-617, and Asp-621 each coordinate Ca(2+). N-linked (GlcNAc...) asparagine glycosylation is present at Asn-642. Cystine bridges form between Cys-659–Cys-668, Cys-674–Cys-729, and Cys-781–Cys-787. Asn-694 carries N-linked (GlcNAc...) asparagine glycosylation. Asn-857 carries N-linked (GlcNAc...) asparagine glycosylation. Residues Cys-881 and Cys-893 are joined by a disulfide bond. Asn-894, Asn-973, Asn-1031, Asn-1039, and Asn-1059 each carry an N-linked (GlcNAc...) asparagine glycan. A helical membrane pass occupies residues 1142–1164 (IWIIVGSTLGGLLLLALLVLALW). The Cytoplasmic segment spans residues 1165–1188 (KLGFFRSARRRREPGLDPTPKVLE).

It belongs to the integrin alpha chain family. In terms of assembly, heterodimer of an alpha and a beta subunit. Alpha-11 associates with beta-1. Interacts with RAB21. In terms of tissue distribution, according to PubMed:10464311, highest levels of expression in uterus and heart, intermediate levels in skeletal muscle and intermediate to low levels in pancreas, kidney and placenta. According to PubMed:10486209, also found in brain, colon, lung, small intestine, stomach, testis, salivary glands, thyroid glands and prostate. Very low levels in peripheral blood lymphocytes, fetal brain and fetal liver.

The protein localises to the membrane. Functionally, integrin alpha-11/beta-1 is a receptor for collagen. The chain is Integrin alpha-11 (ITGA11) from Homo sapiens (Human).